Here is a 494-residue protein sequence, read N- to C-terminus: Hydroxyneurosporene desaturase (494 aa).

The protein belongs to the carotenoid/retinoid oxidoreductase family.

It carries out the reaction rhodopin + A = (3E)-3,4-didehydrorhodopin + AH2. It participates in carotenoid biosynthesis; spheroidene biosynthesis. Its function is as follows. Catalyzes the introduction of C-3,4 double bonds into 1-hydroxyneurosporene (1-HO-Neu) to yield demethylspheroidene (DMS). This chain is Hydroxyneurosporene desaturase (crtD), found in Rhodobacter capsulatus (strain ATCC BAA-309 / NBRC 16581 / SB1003).